We begin with the raw amino-acid sequence, 205 residues long: Large ribosomal subunit protein uL4 (205 aa).

Positions 47 to 70 (TRAQKSRAEVSGGGKKPFRQKGTG) are disordered.

Belongs to the universal ribosomal protein uL4 family. In terms of assembly, part of the 50S ribosomal subunit.

One of the primary rRNA binding proteins, this protein initially binds near the 5'-end of the 23S rRNA. It is important during the early stages of 50S assembly. It makes multiple contacts with different domains of the 23S rRNA in the assembled 50S subunit and ribosome. Functionally, forms part of the polypeptide exit tunnel. The polypeptide is Large ribosomal subunit protein uL4 (Acinetobacter baylyi (strain ATCC 33305 / BD413 / ADP1)).